Consider the following 302-residue polypeptide: Homoserine O-acetyltransferase (302 aa).

Cys142 serves as the catalytic Acyl-thioester intermediate. Residues Lys163 and Ser192 each contribute to the substrate site. Residue His235 is the Proton acceptor of the active site. Glu237 is an active-site residue. Arg249 contributes to the substrate binding site.

The protein belongs to the MetA family.

It is found in the cytoplasm. It carries out the reaction L-homoserine + acetyl-CoA = O-acetyl-L-homoserine + CoA. It functions in the pathway amino-acid biosynthesis; L-methionine biosynthesis via de novo pathway; O-acetyl-L-homoserine from L-homoserine: step 1/1. In terms of biological role, transfers an acetyl group from acetyl-CoA to L-homoserine, forming acetyl-L-homoserine. The sequence is that of Homoserine O-acetyltransferase from Geobacillus kaustophilus (strain HTA426).